Reading from the N-terminus, the 646-residue chain is Phosphomethylpyrimidine synthase (646 aa).

The segment covering 1–13 (MNIRSNPDTTRPA) has biased composition (polar residues). The disordered stretch occupies residues 1–21 (MNIRSNPDTTRPAVTTGGLPS). Substrate is bound by residues asparagine 221, methionine 250, tyrosine 279, histidine 315, 335-337 (SRG), 376-379 (DGLR), and glutamate 415. Histidine 419 serves as a coordination point for Zn(2+). Residue tyrosine 442 coordinates substrate. Histidine 483 lines the Zn(2+) pocket. Residues cysteine 563, cysteine 566, and cysteine 571 each coordinate [4Fe-4S] cluster.

The protein belongs to the ThiC family. As to quaternary structure, homodimer. The cofactor is [4Fe-4S] cluster.

The catalysed reaction is 5-amino-1-(5-phospho-beta-D-ribosyl)imidazole + S-adenosyl-L-methionine = 4-amino-2-methyl-5-(phosphooxymethyl)pyrimidine + CO + 5'-deoxyadenosine + formate + L-methionine + 3 H(+). Its pathway is cofactor biosynthesis; thiamine diphosphate biosynthesis. In terms of biological role, catalyzes the synthesis of the hydroxymethylpyrimidine phosphate (HMP-P) moiety of thiamine from aminoimidazole ribotide (AIR) in a radical S-adenosyl-L-methionine (SAM)-dependent reaction. This chain is Phosphomethylpyrimidine synthase, found in Rhodopseudomonas palustris (strain HaA2).